The chain runs to 118 residues: Large ribosomal subunit protein bL19 (118 aa).

Belongs to the bacterial ribosomal protein bL19 family.

Its function is as follows. This protein is located at the 30S-50S ribosomal subunit interface and may play a role in the structure and function of the aminoacyl-tRNA binding site. The polypeptide is Large ribosomal subunit protein bL19 (Levilactobacillus brevis (strain ATCC 367 / BCRC 12310 / CIP 105137 / JCM 1170 / LMG 11437 / NCIMB 947 / NCTC 947) (Lactobacillus brevis)).